Here is a 307-residue protein sequence, read N- to C-terminus: uncharacterized protein (307 aa).

The 254-residue stretch at Arg-54–Glu-307 folds into the EAL domain. The next 2 helical transmembrane spans lie at Pro-158–Leu-178 and Ala-203–Leu-223.

Its subcellular location is the cell membrane. This is an uncharacterized protein from Mycobacterium tuberculosis (strain CDC 1551 / Oshkosh).